The primary structure comprises 778 residues: Probable potassium transporter 13 (778 aa).

Residues 1–28 (MDVEGGGGGGGGAPPRGRNSWGWQKGTL) lie on the Cytoplasmic side of the membrane. Residues 29 to 49 (LLAYQSFGVVYGDLCISPVYV) form a helical membrane-spanning segment. Topologically, residues 50–72 (YKNTFSGKLRLHEEDEEILGVLS) are extracellular. A helical membrane pass occupies residues 73-93 (LVFWSLTLIPLLKYIILVLGA). Residues 94 to 156 (DDNGEGGTFA…AFFEKHYSLR (63 aa)) are Cytoplasmic-facing. Residues 157 to 177 (VVLLLFVLMGTSMVIGDGVLT) form a helical membrane-spanning segment. Residues 178-199 (PTMSVLAAVSGLRIKFPELHEN) lie on the Extracellular side of the membrane. The N-linked (GlcNAc...) asparagine glycan is linked to Asn199. A helical transmembrane segment spans residues 200-220 (YTVLLACVILIGLFALQHYGT). Residues 221–222 (RR) lie on the Cytoplasmic side of the membrane. Residues 223–243 (VGFLFAPILISWLTCIGGIGI) traverse the membrane as a helical segment. Topologically, residues 244–276 (YNIIKWNPSVIRALSPYYIYNFFRKAGKDGWSS) are extracellular. The helical transmembrane segment at 277 to 297 (LGGIVLCLTGAEAMFADLGHF) threads the bilayer. At 298–303 (SKLSLR) the chain is on the cytoplasmic side. Residues 304-324 (LGFTIVVYPCLVLAYMGEAAY) form a helical membrane-spanning segment. Residues 325-343 (LSKHREDLQSSFYKALPDR) are Extracellular-facing. The chain crosses the membrane as a helical span at residues 344-364 (VFWPVLFIATLATAVGSQAII). Residues 365-395 (SATFSIISQCRALGCFPRIKVVHTSSHVHGQ) lie on the Cytoplasmic side of the membrane. The chain crosses the membrane as a helical span at residues 396–416 (IYIPEVNWVLMSLCLAVTIGF). Residues 417–424 (RDTEMIGN) lie on the Extracellular side of the membrane. The chain crosses the membrane as a helical span at residues 425 to 445 (AYGLAVILVMCATTCLMFLVI). The Cytoplasmic portion of the chain corresponds to 446-451 (TTVWNR). The helical transmembrane segment at 452-472 (WVVWAAAFTVVFGSVELLYLS) threads the bilayer. At 473–477 (ACLAK) the chain is on the extracellular side. Residues 478-498 (VPHGGWLPLLLSLTTLLVMST) traverse the membrane as a helical segment. The Cytoplasmic portion of the chain corresponds to 499–778 (WHYGTAMKQQ…LIEVGMAYRV (280 aa)). Polar residues predominate over residues 655–677 (PATSSSGGSNQHAFDAGTTTSSC). The disordered stretch occupies residues 655–704 (PATSSSGGSNQHAFDAGTTTSSCEIDATAGGGGRRKVRFDNDGGGGGEEE).

Belongs to the HAK/KUP transporter (TC 2.A.72.3) family.

Its subcellular location is the membrane. In terms of biological role, high-affinity potassium transporter. The protein is Probable potassium transporter 13 (HAK13) of Oryza sativa subsp. japonica (Rice).